Here is a 117-residue protein sequence, read N- to C-terminus: uncharacterized protein (117 aa).

The first 24 residues, 1-24, serve as a signal peptide directing secretion; it reads MMTEFGSAMTLVTGLVAYGAYVKS. The interval 42 to 117 is disordered; sequence EKENFNYNNN…NNQIKRRLFD (76 aa). The span at 46–95 shows a compositional bias: low complexity; that stretch reads FNYNNNNNNNNNNNNNNSNNNDNNNNNNSNSNNNNNNNNNNNNNNNNNIN. 2 N-linked (GlcNAc...) asparagine glycosylation sites follow: N61 and N72. Positions 96–110 are enriched in polar residues; it reads DKQINGTNIFDSNNQ.

The protein localises to the secreted. This is an uncharacterized protein from Dictyostelium discoideum (Social amoeba).